Reading from the N-terminus, the 353-residue chain is Glutamate 5-kinase (353 aa).

Residue K8 participates in ATP binding. Residues S47, D134, and N146 each coordinate substrate. 198 to 204 serves as a coordination point for ATP; sequence TGGIRSK. Positions 262–339 constitute a PUA domain; the sequence is AGKIYVNKGA…SDLKKILGYE (78 aa).

It belongs to the glutamate 5-kinase family.

It is found in the cytoplasm. It carries out the reaction L-glutamate + ATP = L-glutamyl 5-phosphate + ADP. Its pathway is amino-acid biosynthesis; L-proline biosynthesis; L-glutamate 5-semialdehyde from L-glutamate: step 1/2. Catalyzes the transfer of a phosphate group to glutamate to form L-glutamate 5-phosphate. The chain is Glutamate 5-kinase from Thermotoga maritima (strain ATCC 43589 / DSM 3109 / JCM 10099 / NBRC 100826 / MSB8).